We begin with the raw amino-acid sequence, 262 residues long: Ribose-5-phosphate isomerase A (262 aa).

Substrate is bound by residues 33-36, 89-92, and 102-105; these read TGST, DGAD, and KGGG. Glu111 functions as the Proton acceptor in the catalytic mechanism. Lys129 serves as a coordination point for substrate.

The protein belongs to the ribose 5-phosphate isomerase family. Homodimer.

The enzyme catalyses aldehydo-D-ribose 5-phosphate = D-ribulose 5-phosphate. Its pathway is carbohydrate degradation; pentose phosphate pathway; D-ribose 5-phosphate from D-ribulose 5-phosphate (non-oxidative stage): step 1/1. Its function is as follows. Catalyzes the reversible conversion of ribose-5-phosphate to ribulose 5-phosphate. The chain is Ribose-5-phosphate isomerase A from Ruegeria sp. (strain TM1040) (Silicibacter sp.).